The primary structure comprises 72 residues: DNA-directed RNA polymerase subunit Rpo10 (72 aa).

Positions 7, 10, 54, and 55 each coordinate Zn(2+).

Belongs to the archaeal Rpo10/eukaryotic RPB10 RNA polymerase subunit family. Part of the RNA polymerase complex. Zn(2+) is required as a cofactor.

It is found in the cytoplasm. It carries out the reaction RNA(n) + a ribonucleoside 5'-triphosphate = RNA(n+1) + diphosphate. Its function is as follows. DNA-dependent RNA polymerase (RNAP) catalyzes the transcription of DNA into RNA using the four ribonucleoside triphosphates as substrates. The polypeptide is DNA-directed RNA polymerase subunit Rpo10 (Picrophilus torridus (strain ATCC 700027 / DSM 9790 / JCM 10055 / NBRC 100828 / KAW 2/3)).